We begin with the raw amino-acid sequence, 376 residues long: 23S rRNA (uracil(747)-C(5))-methyltransferase RlmC (376 aa).

C3, C11, C14, and C87 together coordinate [4Fe-4S] cluster. Positions 212, 241, 262, and 307 each coordinate S-adenosyl-L-methionine. The active-site Nucleophile is C334.

Belongs to the class I-like SAM-binding methyltransferase superfamily. RNA M5U methyltransferase family. RlmC subfamily.

The catalysed reaction is uridine(747) in 23S rRNA + S-adenosyl-L-methionine = 5-methyluridine(747) in 23S rRNA + S-adenosyl-L-homocysteine + H(+). Functionally, catalyzes the formation of 5-methyl-uridine at position 747 (m5U747) in 23S rRNA. This chain is 23S rRNA (uracil(747)-C(5))-methyltransferase RlmC, found in Citrobacter koseri (strain ATCC BAA-895 / CDC 4225-83 / SGSC4696).